Here is a 913-residue protein sequence, read N- to C-terminus: Proline and serine-rich protein 1 (913 aa).

M1 carries the post-translational modification N-acetylmethionine. Disordered stretches follow at residues 233–291 (VPPP…PAVS), 488–507 (ASLSSLPNRNSDSPASATNK), 592–618 (SEPTSPPPSAFKGPAHPGTPVRGTLGL), and 888–913 (DGFPSYPSTPGTPFSLQTGLSQSGWQ). Polar residues predominate over residues 251 to 275 (LSSQSKPTQSQTFSTPASQLFSPHG). The span at 276–291 (SSNPSTPAATPVPAVS) shows a compositional bias: low complexity. Over residues 488-506 (ASLSSLPNRNSDSPASATN) the composition is skewed to polar residues. The span at 893 to 913 (YPSTPGTPFSLQTGLSQSGWQ) shows a compositional bias: polar residues.

As to quaternary structure, interacts with TET2 and OGT; this interaction mediates TET2 O-GlcNAcylation and stability by promoting the interaction between OGT and TET2. Interacts with KDM6A. Interacts with TET1. Glycosylated. Interaction with OGT leads to GlcNAcylation.

Functionally, mediates OGT interaction with and O-GlcNAcylation of TET2 to control TET2 stabilization at enhancers and CpG islands (CGIs). The chain is Proline and serine-rich protein 1 from Mus musculus (Mouse).